The sequence spans 712 residues: Nucleolin (712 aa).

The segment at 1 to 305 is disordered; the sequence is MVKLAKAGKN…KKQKVEGTEP (305 aa). N6-acetyllysine is present on residues K9, K15, and K16. Residues 24 to 43 show a composition bias toward acidic residues; it reads VEEDSEDEEMSEDEEDDSSG. Phosphoserine occurs at positions 28, 34, 41, and 42. The segment covering 56 to 107 has biased composition (low complexity); the sequence is AAATSAKKVVVSPTKKVAVATPAKKAAVTPGKKAAATPAKKTVTPAKAVTTP. Copy 1 of the repeat occupies 58-65; sequence ATSAKKVV. An 8 X 8 AA tandem repeats of X-T-P-X-K-K-X-X region spans residues 58–135; sequence ATSAKKVVVS…GAAIPAKGAK (78 aa). Phosphoserine is present on S67. Phosphothreonine occurs at positions 69, 76, 84, and 92. 3 repeat units span residues 75–82, 83–90, and 91–98. The residue at position 96 (K96) is an N6-acetyllysine. The residue at position 99 (T99) is a Phosphothreonine. The stretch at 99–104 is one 5; truncated repeat; it reads TPAKAV. Residue K102 is modified to N6-acetyllysine. Copy 6 of the repeat occupies 105-112; sequence TTPGKKGA. T106 bears the Phosphothreonine mark. At K109 the chain carries N6-acetyllysine. The residue at position 113 (T113) is a Phosphothreonine. At K116 the chain carries N6-acetyllysine. Tandem repeats lie at residues 120–127 and 128–135. Phosphothreonine is present on T121. The segment covering 122 to 137 has biased composition (low complexity); the sequence is PGKKGAAIPAKGAKNG. K124 is modified (N6-acetyllysine). 2 positions are modified to phosphoserine: S145 and S153. Positions 145–171 are enriched in acidic residues; it reads SDEEEEDDSEEDEDDDEDEDEDEDEIE. Residues 172-183 are compositionally biased toward low complexity; that stretch reads PAAMKAAAAAPA. S184 and S206 each carry phosphoserine. A compositionally biased stretch (acidic residues) spans 184–211; it reads SEDEDDEDDEDDEDEDDDEEDDSEEEAM. A Phosphothreonine modification is found at T214. A compositionally biased stretch (acidic residues) spans 234 to 274; that stretch reads EDEDEEEDDEDEDDDDDDDDDDEDDEDEDDEEEEEEEEEEP. Positions 275–302 are enriched in basic and acidic residues; it reads VKEAPGKRKKEMAKQKAAPEAKKQKVEG. K299 participates in a covalent cross-link: Glycyl lysine isopeptide (Lys-Gly) (interchain with G-Cter in SUMO1); alternate. K299 participates in a covalent cross-link: Glycyl lysine isopeptide (Lys-Gly) (interchain with G-Cter in SUMO2); alternate. Position 303 is a phosphothreonine (T303). RRM domains lie at 309–385 and 395–468; these read FNLF…KPKG and RTLL…YTGE. N6-acetyllysine is present on K320. K326 is covalently cross-linked (Glycyl lysine isopeptide (Lys-Gly) (interchain with G-Cter in SUMO1); alternate). A Glycyl lysine isopeptide (Lys-Gly) (interchain with G-Cter in SUMO2); alternate cross-link involves residue K326. At K350 the chain carries N6-acetyllysine. S358 is subject to Phosphoserine. T369 is modified (phosphothreonine). A Glycyl lysine isopeptide (Lys-Gly) (interchain with G-Cter in SUMO2) cross-link involves residue K372. Residue K379 forms a Glycyl lysine isopeptide (Lys-Gly) (interchain with G-Cter in SUMO2); alternate linkage. The residue at position 379 (K379) is an N6-acetyllysine; alternate. N6-acetyllysine is present on residues K400 and K405. The residue at position 407 (T407) is a Phosphothreonine. Residues K429 and K446 each carry the N6-acetyllysine modification. S460 and S462 each carry phosphoserine. N6-acetyllysine is present on residues K469 and K479. An RRM 3 domain is found at 488–562; sequence KTLVLSNLSY…RAIRLELQGP (75 aa). A Glycyl lysine isopeptide (Lys-Gly) (interchain with G-Cter in SUMO2); alternate cross-link involves residue K515. K515 carries the N6-acetyllysine; alternate modification. K523 is modified (N6-acetyllysine). Position 565 is a phosphoserine (S565). An N6-acetyllysine modification is found at K574. The RRM 4 domain maps to 574 to 649; the sequence is KTLFVKGLSE…NKVTLDWAKP (76 aa). K579 participates in a covalent cross-link: Glycyl lysine isopeptide (Lys-Gly) (interchain with G-Cter in SUMO2); alternate. Position 579 is an N6-acetyllysine; alternate (K579). Residue S582 is modified to Phosphoserine. K591 is covalently cross-linked (Glycyl lysine isopeptide (Lys-Gly) (interchain with G-Cter in SUMO1); alternate). A Glycyl lysine isopeptide (Lys-Gly) (interchain with G-Cter in SUMO2); alternate cross-link involves residue K591. Residues S593 and S621 each carry the phosphoserine modification. Residue K626 forms a Glycyl lysine isopeptide (Lys-Gly) (interchain with G-Cter in SUMO2) linkage. A disordered region spans residues 642–712; the sequence is VTLDWAKPKG…KPQGKKTKFE (71 aa). The residue at position 648 (K648) is an N6-acetyllysine. Over residues 652–698 the composition is skewed to gly residues; the sequence is EGGFGGRGGGRGGFGGRGGGRGGRGGFGGRGRGGFGGRGGFRGGRGG. Residues R658, R662, R668, R672, R675, R681, R683, R689, and R693 each carry the asymmetric dimethylarginine modification. R696 carries the post-translational modification Asymmetric dimethylarginine; alternate. The residue at position 696 (R696) is an Omega-N-methylarginine; alternate. Residues 699-712 are compositionally biased toward basic and acidic residues; it reads GGDHKPQGKKTKFE.

In terms of assembly, identified in a IGF2BP1-dependent mRNP granule complex containing untranslated mRNAs. Component of the SWAP complex that consists of NPM1, NCL/nucleolin, PARP1 and SWAP70. Component of a complex which is at least composed of HTATSF1/Tat-SF1, the P-TEFb complex components CDK9 and CCNT1, RNA polymerase II, SUPT5H, and NCL/nucleolin. Interacts with AICDA. Interacts with APTX. Interacts with C1QBP. Interacts with ERBB4. Interacts (via C-terminus) with FMR1 isoform 6 (via N-terminus). Interacts with GZF1; this interaction is important for nucleolar localization of GZF1. Interacts with NSUN2. Interacts with NVL. Interacts (via N-terminus domain) with SETX. Interacts (via RRM1 and C-terminal RRM4/Arg/Gly-rich domains) with TERT; the interaction is important for nucleolar localization of TERT. Interacts with WDR46. Interacts with ZFP36. Interacts with LRRC34. Interacts with RRP1B. Interacts with HNRNPU; this interaction occurs during mitosis. Interacts with RIOK1; RIOK1 recruits NCL to the PRMT5 for symmetrically methylation. Interacts with ZBTB7B. Interacts with MDK; this interaction promotes NCL clustering and lateral movements of this complex into lipid rafts leading to MDK internalization. Interacts with HDGF. Interacts with ALKBH2. Interacts with IGFBP5; this interaction is necessary for IGFBP5 localization to the nucleus. Interacts with DDX24 (when ubiquitinated); this interaction may be important during ribosome biogenesis. In terms of processing, some glutamate residues are glycylated by TTLL8. This modification occurs exclusively on glutamate residues and results in a glycine chain on the gamma-carboxyl group. Symmetrically methylated by PRMT5.

It localises to the nucleus. The protein localises to the nucleolus. The protein resides in the cytoplasm. Its function is as follows. Nucleolin is the major nucleolar protein of growing eukaryotic cells. It is found associated with intranucleolar chromatin and pre-ribosomal particles. It induces chromatin decondensation by binding to histone H1. It is thought to play a role in pre-rRNA transcription and ribosome assembly. May play a role in the process of transcriptional elongation. Binds RNA oligonucleotides with 5'-UUAGGG-3' repeats more tightly than the telomeric single-stranded DNA 5'-TTAGGG-3' repeats. The chain is Nucleolin (NCL) from Pongo abelii (Sumatran orangutan).